The primary structure comprises 89 residues: Small ribosomal subunit protein uS15 (89 aa).

It belongs to the universal ribosomal protein uS15 family. In terms of assembly, part of the 30S ribosomal subunit. Forms a bridge to the 50S subunit in the 70S ribosome, contacting the 23S rRNA.

In terms of biological role, one of the primary rRNA binding proteins, it binds directly to 16S rRNA where it helps nucleate assembly of the platform of the 30S subunit by binding and bridging several RNA helices of the 16S rRNA. Forms an intersubunit bridge (bridge B4) with the 23S rRNA of the 50S subunit in the ribosome. The polypeptide is Small ribosomal subunit protein uS15 (Acaryochloris marina (strain MBIC 11017)).